The following is a 446-amino-acid chain: Hercynine oxygenase (446 aa).

H51 serves as a coordination point for Fe cation. Position 87-90 (87-90 (RASR)) interacts with gamma-L-glutamyl-L-cysteine. Fe cation contacts are provided by H134 and H138. Gamma-L-glutamyl-L-cysteine is bound by residues D416 and R420.

This sequence belongs to the EgtB family. Monomer. Fe(2+) serves as cofactor.

It catalyses the reaction gamma-L-glutamyl-L-cysteine + hercynine + O2 = gamma-L-glutamyl-hercynylcysteine S-oxide + H2O. It functions in the pathway amino-acid biosynthesis; ergothioneine biosynthesis. Catalyzes the oxidative sulfurization of hercynine (N-alpha,N-alpha,N-alpha-trimethyl-L-histidine) into hercynyl-gamma-L-glutamyl-L-cysteine sulfoxide, a step in the biosynthesis pathway of ergothioneine. The sequence is that of Hercynine oxygenase from Mycolicibacterium thermoresistibile (strain ATCC 19527 / DSM 44167 / CIP 105390 / JCM 6362 / NCTC 10409 / 316) (Mycobacterium thermoresistibile).